The sequence spans 119 residues: Protein TusC (119 aa).

Belongs to the DsrF/TusC family. In terms of assembly, heterohexamer, formed by a dimer of trimers. The hexameric TusBCD complex contains 2 copies each of TusB, TusC and TusD. The TusBCD complex interacts with TusE.

The protein resides in the cytoplasm. In terms of biological role, part of a sulfur-relay system required for 2-thiolation of 5-methylaminomethyl-2-thiouridine (mnm(5)s(2)U) at tRNA wobble positions. This Shigella flexneri serotype 5b (strain 8401) protein is Protein TusC.